Here is a 78-residue protein sequence, read N- to C-terminus: Large ribosomal subunit protein uL10 (78 aa).

A compositionally biased stretch (low complexity) spans 40–50 (AAAAAATAPAA). Residues 40-78 (AAAAAATAPAAETKKEEKKEEKKEETEESDDDIGLSLFH) form a disordered region. The span at 51 to 64 (ETKKEEKKEEKKEE) shows a compositional bias: basic and acidic residues.

This sequence belongs to the universal ribosomal protein uL10 family. As to quaternary structure, P0 forms a pentameric complex by interaction with dimers of P1 and P2.

It localises to the nucleus. The protein localises to the cytoplasm. Functionally, ribosomal protein P0 is the functional equivalent of E.coli protein L10. In Culicoides nubeculosus (Biting midge), this protein is Large ribosomal subunit protein uL10.